We begin with the raw amino-acid sequence, 73 residues long: Toxin Td3 (73 aa).

The signal sequence occupies residues 1 to 7 (IGMVVEC). In terms of domain architecture, LCN-type CS-alpha/beta spans 8-70 (KDGYLMGPDG…VWERATNRCG (63 aa)). 4 cysteine pairs are disulfide-bonded: Cys-18-Cys-69, Cys-22-Cys-44, Cys-30-Cys-50, and Cys-34-Cys-52. Lys-71 carries the lysine amide modification.

This sequence belongs to the long (4 C-C) scorpion toxin superfamily. Sodium channel inhibitor family. Beta subfamily. Expressed by the venom gland.

The protein localises to the secreted. Its function is as follows. Beta toxins bind voltage-independently at site-4 of sodium channels (Nav) and shift the voltage of activation toward more negative potentials thereby affecting sodium channel activation and promoting spontaneous and repetitive firing. This chain is Toxin Td3, found in Tityus discrepans (Venezuelan scorpion).